The chain runs to 233 residues: Small ribosomal subunit protein uS5 (233 aa).

Residues 1–13 (MAEETQNTVATES) show a composition bias toward polar residues. Residues 1 to 40 (MAEETQNTVATESNNEDRKGRRGQRGEGRRGERRNRREEN) are disordered. Positions 15 to 40 (NEDRKGRRGQRGEGRRGERRNRREEN) are enriched in basic and acidic residues. The S5 DRBM domain maps to 45 to 108 (LLDRVVTINR…LDAKKHMFSV (64 aa)).

It belongs to the universal ribosomal protein uS5 family. In terms of assembly, part of the 30S ribosomal subunit. Contacts proteins S4 and S8.

In terms of biological role, with S4 and S12 plays an important role in translational accuracy. Functionally, located at the back of the 30S subunit body where it stabilizes the conformation of the head with respect to the body. The sequence is that of Small ribosomal subunit protein uS5 from Bifidobacterium longum (strain NCC 2705).